We begin with the raw amino-acid sequence, 139 residues long: uncharacterized protein (139 aa).

It to E.coli YebE.

This is an uncharacterized protein from Yersinia enterocolitica.